A 135-amino-acid polypeptide reads, in one-letter code: Beta/delta-urticatoxin-Ui2a (135 aa).

The N-terminal stretch at 1–18 (MGAIVLVAIMALVASSSA) is a signal peptide. A propeptide spanning residues 19–72 (FSDDEQNMMNAEGEKGIRSYSAADDVSDMIESLFVNSGNRNLVLMMLSGRPQPN) is cleaved from the precursor. Disulfide bonds link cysteine 75–cysteine 92, cysteine 82–cysteine 97, cysteine 91–cysteine 105, cysteine 107–cysteine 121, cysteine 114–cysteine 126, and cysteine 120–cysteine 134.

The protein belongs to the urticatoxin-2 family. As to expression, expressed in trichomes, that are stiff epidermal hairs located on the surface of petioles and leaves.

The protein resides in the secreted. In terms of biological role, plant defense neurotoxin that causes pain and systemic symptoms in mammals via modulation of voltage-gated sodium channels (Nav). Potent modulator of human Nav1.5/SCN5A (EC(50)=55 nM), Nav1.6/SCN8A (EC(50)=0.86 nM), and Nav1.7/SCN9A (EC(50)=208 nM), where it shifts the activation threshold to more negative potentials and delays fast inactivation. Also shifts the voltage-dependence of steady-state fast inactivation of Nav1.6/SCN8A, but not that of Nav1.5/SCN5A or Nav1.7/SCN9A. On Nav1.7/SCN9A, principally acts by binding to extracellular loops of domain IV (Nav site 3). In vivo, intraplantar injection into mice causes numerous dose-dependent, immediate, and long-lasting spontaneous pain behaviors, while no swelling is observed in the injected paw. At the highest doses tested, systemic symptoms including hypokinesia and hypersalivation are observed. This chain is Beta/delta-urticatoxin-Ui2a, found in Urtica incisa (Scrub nettle).